A 107-amino-acid polypeptide reads, in one-letter code: Integration host factor subunit alpha (107 aa).

Belongs to the bacterial histone-like protein family. As to quaternary structure, heterodimer of an alpha and a beta chain.

This protein is one of the two subunits of integration host factor, a specific DNA-binding protein that functions in genetic recombination as well as in transcriptional and translational control. The polypeptide is Integration host factor subunit alpha (Mesorhizobium japonicum (strain LMG 29417 / CECT 9101 / MAFF 303099) (Mesorhizobium loti (strain MAFF 303099))).